The following is a 1166-amino-acid chain: Tectonin beta-propeller repeat-containing protein 1 (1166 aa).

4 TECPR repeats span residues 209 to 240 (LSVW…SLVD), 254 to 285 (DLIW…SIVE), 301 to 332 (SVVW…IEMV), and 344 to 376 (DQVW…KAIV). Phosphoserine occurs at positions 386, 388, 391, 413, and 418. The segment at 403–492 (VRGSGTESAP…PAPTPAELPW (90 aa)) is disordered. A compositionally biased stretch (polar residues) spans 407 to 418 (GTESAPSDTDAS). Positions 420–436 (EVERQGPERSLPKESLD) are enriched in basic and acidic residues. A compositionally biased stretch (polar residues) spans 437–446 (NSRNLKGSSS). Over residues 447–456 (KGHESTRNTE) the composition is skewed to basic and acidic residues. A PH domain is found at 616 to 722 (KTGALQWWCD…WLTLLSLSCC (107 aa)). A TECPR 5 repeat occupies 734–761 (QAIWSVTCKGDIFVSEPSPDLEAHEHLL). Ser-943 carries the post-translational modification Phosphoserine. 4 TECPR repeats span residues 958 to 989 (IALW…LHVG), 1003 to 1034 (YQVW…YHIP), 1049 to 1080 (TSVY…EHVS), and 1092 to 1132 (DQVW…DYGI). The disordered stretch occupies residues 1147–1166 (RAPRNMSRDQEAHGPGPVCC).

It belongs to the TECPR1 family. As to quaternary structure, interacts with ATG5; the interaction is direct. Interacts with WIPI2. Interacts with the ATG5-ATG12 conjugate, the interaction is however mutually exclusive with ATG16, since it does not interact with ATG12-ATG5-ATG16 complex.

It is found in the cytoplasmic vesicle. Its subcellular location is the autophagosome membrane. It localises to the lysosome membrane. Functionally, tethering factor involved in autophagy. Involved in autophagosome maturation by promoting the autophagosome fusion with lysosomes: acts by associating with both the ATG5-ATG12 conjugate and phosphatidylinositol-3-phosphate (PtdIns(3)P) present at the surface of autophagosomes. Also involved in selective autophagy against bacterial pathogens, by being required for phagophore/preautophagosomal structure biogenesis and maturation. This chain is Tectonin beta-propeller repeat-containing protein 1 (Tecpr1), found in Rattus norvegicus (Rat).